A 233-amino-acid chain; its full sequence is Ribose-5-phosphate isomerase A (233 aa).

Residues 31–34 (SGST), 87–90 (DGAD), and 100–103 (KGGG) contribute to the substrate site. Residue Glu109 is the Proton acceptor of the active site. Lys127 is a substrate binding site.

This sequence belongs to the ribose 5-phosphate isomerase family. In terms of assembly, homodimer.

The enzyme catalyses aldehydo-D-ribose 5-phosphate = D-ribulose 5-phosphate. The protein operates within carbohydrate degradation; pentose phosphate pathway; D-ribose 5-phosphate from D-ribulose 5-phosphate (non-oxidative stage): step 1/1. Catalyzes the reversible conversion of ribose-5-phosphate to ribulose 5-phosphate. This chain is Ribose-5-phosphate isomerase A, found in Chlamydia felis (strain Fe/C-56) (Chlamydophila felis).